The following is a 154-amino-acid chain: Telokin (154 aa).

Residues 1 to 24 (ISGMSGRKASGSSPTSPINANKVE) are disordered. Polar residues predominate over residues 10–19 (SGSSPTSPIN). The region spanning 42–133 (PYFTKTILDM…ATCTAELLVE (92 aa)) is the Ig-like C2-type domain. A disordered region spans residues 134-154 (TMGKEGEGEGEGEEDEEEEEE). A compositionally biased stretch (acidic residues) spans 141-154 (GEGEGEEDEEEEEE).

It belongs to the protein kinase superfamily. CAMK Ser/Thr protein kinase family. As to quaternary structure, binds calmodulin.

Its function is as follows. Corresponds to the C-terminus of smooth muscle myosin light chain kinase. In Meleagris gallopavo (Wild turkey), this protein is Telokin.